The primary structure comprises 406 residues: Homocysteine-responsive endoplasmic reticulum-resident ubiquitin-like domain member 2 protein (406 aa).

One can recognise a Ubiquitin-like domain in the interval 10–89 (VTLIIKAPNQ…HMVHLVCTSR (80 aa)). A disordered region spans residues 86–154 (CTSRTPPSSP…TLPQAQTDQA (69 aa)). 2 stretches are compositionally biased toward low complexity: residues 87-98 (TSRTPPSSPKSS) and 106-126 (ALAS…PSSG). The segment covering 127 to 154 (QETLSLAVGSSSEGLRQRTLPQAQTDQA) has biased composition (polar residues). Residues 302 to 322 (FIMVMGAMLLVYLHQAGWFPF) form a helical membrane-spanning segment.

The protein localises to the membrane. In terms of biological role, could be involved in the unfolded protein response (UPR) pathway. This Homo sapiens (Human) protein is Homocysteine-responsive endoplasmic reticulum-resident ubiquitin-like domain member 2 protein (HERPUD2).